A 285-amino-acid polypeptide reads, in one-letter code: RNA polymerase sigma factor RpoH (285 aa).

A sigma-70 factor domain-2 region spans residues 53 to 122 (LILSHLRFVV…IHEYVLRNWR (70 aa)). The Interaction with polymerase core subunit RpoC motif lies at 77 to 80 (DLVQ). The sigma-70 factor domain-4 stretch occupies residues 229–280 (ALASLDERSQHIVRSRWLDDDKATLQDLAEMYGVSAERIRQLEKNAMKKLKM). Residues 253–272 (LQDLAEMYGVSAERIRQLEK) constitute a DNA-binding region (H-T-H motif).

The protein belongs to the sigma-70 factor family. RpoH subfamily. As to quaternary structure, interacts with the RNA polymerase core enzyme.

It is found in the cytoplasm. In terms of biological role, sigma factors are initiation factors that promote the attachment of RNA polymerase to specific initiation sites and are then released. This sigma factor is involved in regulation of expression of heat shock genes. The sequence is that of RNA polymerase sigma factor RpoH from Vibrio vulnificus (strain CMCP6).